The primary structure comprises 292 residues: Tyrosine isonitrile desaturase (292 aa).

3 residues coordinate Fe cation: His110, Asp112, and His259.

This sequence belongs to the TfdA dioxygenase family. It depends on Fe(2+) as a cofactor.

The catalysed reaction is (2S)-3-(4-hydroxyphenyl)-2-isocyanopropanoate + 2-oxoglutarate + O2 = (2E)-3-(4-hydroxyphenyl)-2-isocyanoprop-2-enoate + succinate + CO2 + H2O. Functionally, catalyzes the 2-oxoglutarate-dependent oxidation of tyrosine isonitrile. This Erwinia amylovora (strain CFBP1430) protein is Tyrosine isonitrile desaturase.